A 399-amino-acid chain; its full sequence is Carbamoyl phosphate synthase small chain (399 aa).

Residues methionine 1–alanine 206 are CPSase. Positions 60, 258, and 260 each coordinate L-glutamine. The Glutamine amidotransferase type-1 domain maps to histidine 210–threonine 398. Cysteine 287 serves as the catalytic Nucleophile. Residues leucine 288, glutamine 291, asparagine 329, glycine 331, and phenylalanine 332 each coordinate L-glutamine. Catalysis depends on residues histidine 371 and glutamate 373.

It belongs to the CarA family. In terms of assembly, composed of two chains; the small (or glutamine) chain promotes the hydrolysis of glutamine to ammonia, which is used by the large (or ammonia) chain to synthesize carbamoyl phosphate. Tetramer of heterodimers (alpha,beta)4.

The enzyme catalyses hydrogencarbonate + L-glutamine + 2 ATP + H2O = carbamoyl phosphate + L-glutamate + 2 ADP + phosphate + 2 H(+). It carries out the reaction L-glutamine + H2O = L-glutamate + NH4(+). The protein operates within amino-acid biosynthesis; L-arginine biosynthesis; carbamoyl phosphate from bicarbonate: step 1/1. It participates in pyrimidine metabolism; UMP biosynthesis via de novo pathway; (S)-dihydroorotate from bicarbonate: step 1/3. Functionally, small subunit of the glutamine-dependent carbamoyl phosphate synthetase (CPSase). CPSase catalyzes the formation of carbamoyl phosphate from the ammonia moiety of glutamine, carbonate, and phosphate donated by ATP, constituting the first step of 2 biosynthetic pathways, one leading to arginine and/or urea and the other to pyrimidine nucleotides. The small subunit (glutamine amidotransferase) binds and cleaves glutamine to supply the large subunit with the substrate ammonia. The chain is Carbamoyl phosphate synthase small chain from Bartonella henselae (strain ATCC 49882 / DSM 28221 / CCUG 30454 / Houston 1) (Rochalimaea henselae).